Here is a 307-residue protein sequence, read N- to C-terminus: MLQQRTLKSISRAVGVGLHSGQRVELTLRPAPVDTGIVFRRVDLPEPVDIRMTAEAVTDTRLASTVSTGGAKVQTVEHLMSACAGLGIDNLYIDITADEVPILDGSASSFVFLLQSAGIELQKAPRRFIRVTRKVEVREGEGANEKWASLEPYHGYKLSFEIDFDHRVVNSTGQRVEFDLGTDSYSRDIARARTFGFTKEVEYMRSKGLALGGGLDNAIVMDDTKVLNAGGLRYDDEFVKHKILDAMGDLYIIGKPLLAAYTAFRSGHALNNKLLRELLAHSDAYEVVTFEDEKRAPRGFGEVARAW.

Residues His78, His241, and Asp245 each contribute to the Zn(2+) site. His268 (proton donor) is an active-site residue.

This sequence belongs to the LpxC family. Requires Zn(2+) as cofactor.

It carries out the reaction a UDP-3-O-[(3R)-3-hydroxyacyl]-N-acetyl-alpha-D-glucosamine + H2O = a UDP-3-O-[(3R)-3-hydroxyacyl]-alpha-D-glucosamine + acetate. It participates in glycolipid biosynthesis; lipid IV(A) biosynthesis; lipid IV(A) from (3R)-3-hydroxytetradecanoyl-[acyl-carrier-protein] and UDP-N-acetyl-alpha-D-glucosamine: step 2/6. Catalyzes the hydrolysis of UDP-3-O-myristoyl-N-acetylglucosamine to form UDP-3-O-myristoylglucosamine and acetate, the committed step in lipid A biosynthesis. The chain is UDP-3-O-acyl-N-acetylglucosamine deacetylase from Variovorax paradoxus (strain S110).